The following is a 173-amino-acid chain: Peptidoglycan-associated lipoprotein (173 aa).

The signal sequence occupies residues 1-21; that stretch reads MKSKKIFKILTLLLPMITTFS. The N-palmitoyl cysteine moiety is linked to residue Cys22. Cys22 is lipidated: S-diacylglycerol cysteine. One can recognise an OmpA-like domain in the interval 59–173; it reads ETLEKLKKGN…KNRRSVIIYQ (115 aa).

Belongs to the Pal lipoprotein family.

Its subcellular location is the cell outer membrane. This is Peptidoglycan-associated lipoprotein from Buchnera aphidicola subsp. Baizongia pistaciae (strain Bp).